Here is a 145-residue protein sequence, read N- to C-terminus: MHKKLKAWGGATGLFVVALGVTIIALPMRQKNSHGTMIIDGTVTQIFSTYQGNLSNVWLTQTDPQGNVVKSWTTRYQTLPDPSSQKLNLIPDYSQSNASRDYNVLSIYQLGKGCFLAFPYKLLTAEKMLVFLSKRFLGSYHEPPR.

In terms of biological role, involved in TCP pilus biogenesis. The sequence is that of Toxin coregulated pilus biosynthesis protein H (tcpH) from Vibrio cholerae serotype O1 (strain ATCC 39315 / El Tor Inaba N16961).